We begin with the raw amino-acid sequence, 644 residues long: MALLQISEPGLTAAPHQRRLAAGIDLGTTNSLVATVRSGKAQTLADEQLADEQLIAGEQLIAGEQLIAGQQLINEKQRDLLPSVVHYHPQGIDVGWKARNLAALDPVNTISSVKRMMGRSLADIVQRYPNLPYQFHASENGLPMIQTARGLVNPVQVSAEILKTLAQRAQAALAGELDGVVITVPAYFDDAQRQGTKDAARLAGLHVLRLLNEPTAAAIAYGLDSGQEGVIAVYDLGGGTFDISILRLSRGVFEVLATGGDSALGGDDFDHLLADWLREQAGVATRDDHGIQRQLLDTAIAAKIALSEAETAVVSVAGWQGEVTREQLESLIAPLVKRTLMACRRALKDAGVTADEILEVVMVGGSTRVPLVREQVGQFFGRTPLTSIDPDKVVAIGAAIQADILVGNKPDSDMLLLDVIPLSLGLETMGGLVEKVIPRNTTIPAARAQEFTTFKDGQSAMMIHVLQGERELVKDCRSLARFTLRGLPPLPAGGAHIRVTFQVDADGLLSVTAMEKSTGVEASIQVKPSYGLSDDEIANMIKDSMANAQSDITARKLAEQQVDAARVLESLQGALAEDAALLSEQESAAIAQAVALLQQQMQGSDPQAIEAATKALDAQTQDFAARRMDASIRRALAGHSVDEV.

The protein belongs to the heat shock protein 70 family.

In terms of biological role, chaperone involved in the maturation of iron-sulfur cluster-containing proteins. Has a low intrinsic ATPase activity which is markedly stimulated by HscB. Involved in the maturation of IscU. In Yersinia pseudotuberculosis serotype I (strain IP32953), this protein is Chaperone protein HscA.